A 405-amino-acid chain; its full sequence is CMP-sialic acid transporter 3 (405 aa).

Residues 1-39 (MKNGIAECPACHSKLVSPGSKTISRAYDDHKIRVSSKQR) are Cytoplasmic-facing. Residues 40 to 60 (VLNVLLVVGDCMLVGLQPVLV) traverse the membrane as a helical segment. At 61–73 (YMSKVDGKFNFSP) the chain is on the lumenal side. A helical membrane pass occupies residues 74–94 (ISVNFLTEIAKVIFAIVMLLI). Topologically, residues 95 to 142 (QARHQKVGEKPLLSVSTFVQAARNNVLLAVPALLYAINNYLKFTMQLY) are cytoplasmic. A helical membrane pass occupies residues 143–163 (FNPATVKMLSNLKVLVIAVLL). The Lumenal segment spans residues 164-170 (KMVMKRR). The chain crosses the membrane as a helical span at residues 171–191 (FSIIQWEALALLLIGISVNQL). Residues 192-199 (RSLPEGAT) are Cytoplasmic-facing. Residues 200-220 (AIGIPLATGAYVCTVIFVTVP) traverse the membrane as a helical segment. Over 221–243 (SMASVFNEYALKSQYDTSIYLQN) the chain is Lumenal. The chain crosses the membrane as a helical span at residues 244-264 (LFLYGYGAIFNFLGILGTVIY). Residues 265–280 (KGPGSFDILQGHSRAT) are Cytoplasmic-facing. Residues 281 to 301 (MFLILNNAAQGILSSFFFKYA) traverse the membrane as a helical segment. The Lumenal segment spans residues 302-321 (DTILKKYSSTVATIFTGIAS). A helical transmembrane segment spans residues 322-342 (AALFGHVITMNFLLGISIVFI). Over 343-405 (SMHQFFSPLA…SDDRTPLLPR (63 aa)) the chain is Cytoplasmic. The disordered stretch occupies residues 385–405 (GANEEASHRGESDDRTPLLPR). A compositionally biased stretch (basic and acidic residues) spans 389-405 (EASHRGESDDRTPLLPR).

It belongs to the nucleotide-sugar transporter family. CMP-Sialate:CMP antiporter (TC 2.A.7.12) subfamily.

Its subcellular location is the golgi apparatus membrane. Functionally, sugar transporter involved in the transport of CMP-sialic acid from the cytoplasm into the Golgi. The polypeptide is CMP-sialic acid transporter 3 (UTR6) (Arabidopsis thaliana (Mouse-ear cress)).